Here is an 88-residue protein sequence, read N- to C-terminus: Small ribosomal subunit protein uS17 (88 aa).

This sequence belongs to the universal ribosomal protein uS17 family. As to quaternary structure, part of the 30S ribosomal subunit.

In terms of biological role, one of the primary rRNA binding proteins, it binds specifically to the 5'-end of 16S ribosomal RNA. The polypeptide is Small ribosomal subunit protein uS17 (Syntrophotalea carbinolica (strain DSM 2380 / NBRC 103641 / GraBd1) (Pelobacter carbinolicus)).